Consider the following 116-residue polypeptide: Prefoldin subunit beta (116 aa).

The protein belongs to the prefoldin subunit beta family. In terms of assembly, heterohexamer of two alpha and four beta subunits.

It localises to the cytoplasm. Its function is as follows. Molecular chaperone capable of stabilizing a range of proteins. Seems to fulfill an ATP-independent, HSP70-like function in archaeal de novo protein folding. In Methanobrevibacter smithii (strain ATCC 35061 / DSM 861 / OCM 144 / PS), this protein is Prefoldin subunit beta.